The chain runs to 248 residues: Small ribosomal subunit protein uS2 (248 aa).

It belongs to the universal ribosomal protein uS2 family.

The sequence is that of Small ribosomal subunit protein uS2 from Janthinobacterium sp. (strain Marseille) (Minibacterium massiliensis).